Consider the following 178-residue polypeptide: E1B protein, small T-antigen (178 aa).

Belongs to the adenoviridae E1B 19 kDa protein family.

The protein localises to the host cell membrane. The protein resides in the host nucleus envelope. It is found in the host nucleus lamina. In terms of biological role, putative adenovirus Bcl-2 homolog that inhibits apoptosis induced by TNF or FAS pathways, as well as p53-mediated apoptosis. Without E1B 19K function, virus production is compromised because of premature death of host cell. Interacts with Bax protein in cell lysates. This Human adenovirus B serotype 7 (HAdV-7) protein is E1B protein, small T-antigen.